We begin with the raw amino-acid sequence, 97 residues long: Aspartyl/glutamyl-tRNA(Asn/Gln) amidotransferase subunit C (97 aa).

This sequence belongs to the GatC family. As to quaternary structure, heterotrimer of A, B and C subunits.

The enzyme catalyses L-glutamyl-tRNA(Gln) + L-glutamine + ATP + H2O = L-glutaminyl-tRNA(Gln) + L-glutamate + ADP + phosphate + H(+). It carries out the reaction L-aspartyl-tRNA(Asn) + L-glutamine + ATP + H2O = L-asparaginyl-tRNA(Asn) + L-glutamate + ADP + phosphate + 2 H(+). In terms of biological role, allows the formation of correctly charged Asn-tRNA(Asn) or Gln-tRNA(Gln) through the transamidation of misacylated Asp-tRNA(Asn) or Glu-tRNA(Gln) in organisms which lack either or both of asparaginyl-tRNA or glutaminyl-tRNA synthetases. The reaction takes place in the presence of glutamine and ATP through an activated phospho-Asp-tRNA(Asn) or phospho-Glu-tRNA(Gln). The chain is Aspartyl/glutamyl-tRNA(Asn/Gln) amidotransferase subunit C from Prochlorococcus marinus (strain MIT 9515).